Consider the following 282-residue polypeptide: TTTTPPSTPPLDDPATDPFLVARAAADHIAQATGVEGHDMALVLGSGWGGAAELLGEVVAEVPTHEIPGFSAPAVAGHLSVTRSIRVERADGSVRHALVLGSRTHLYEGKGVRAVVHGVRTAAATGAETLILTNGCGGLNQEWGAGTPVLLSDHINLTARSPLEGPTFVDLTDVYSPRLRELAHRVDPTLPEGVYAQFPGPHYETPAEVRMAGILGADLVGMSTTLEAIAARHCGLEVLGVSLVTNLAAGISPTPLSHAEVIEAGQAAGPRISALLADIAKR.

Phosphate-binding positions include Ser-46, His-78, and 103 to 105 (RTH). Glu-204 is an active-site residue. Glu-204 is an a purine D-ribonucleoside binding site. Ser-223 lines the phosphate pocket. Asn-246 contacts a purine D-ribonucleoside.

Belongs to the PNP/MTAP phosphorylase family. As to quaternary structure, homotrimer.

It carries out the reaction a purine 2'-deoxy-D-ribonucleoside + phosphate = a purine nucleobase + 2-deoxy-alpha-D-ribose 1-phosphate. Its pathway is purine metabolism; purine nucleoside salvage. In terms of biological role, the purine nucleoside phosphorylases catalyze the phosphorolytic breakdown of the N-glycosidic bond in the beta-(deoxy)ribonucleoside molecules, with the formation of the corresponding free purine bases and pentose-1-phosphate. Cleaves guanosine, inosine, 2'-deoxyguanosine and 2'-deoxyinosine. This chain is Purine nucleoside phosphorylase (punA), found in Cellulomonas sp.